A 340-amino-acid polypeptide reads, in one-letter code: uncharacterized protein (340 aa).

An N-terminal signal peptide occupies residues 1–23; sequence MQKKVLSLVLVLAVLESIVPVSA.

This is an uncharacterized protein from Archaeoglobus fulgidus (strain ATCC 49558 / DSM 4304 / JCM 9628 / NBRC 100126 / VC-16).